Reading from the N-terminus, the 426-residue chain is uncharacterized protein (426 aa).

The protein belongs to the serpin family.

This is an uncharacterized protein from Methanosarcina acetivorans (strain ATCC 35395 / DSM 2834 / JCM 12185 / C2A).